A 400-amino-acid chain; its full sequence is Glutamyl-tRNA reductase (400 aa).

Substrate-binding positions include 45-48 (TCNR), serine 103, 108-110 (EDQ), and glutamine 114. Catalysis depends on cysteine 46, which acts as the Nucleophile. Residue 179-184 (GYGEIG) coordinates NADP(+).

Belongs to the glutamyl-tRNA reductase family. Homodimer.

The catalysed reaction is (S)-4-amino-5-oxopentanoate + tRNA(Glu) + NADP(+) = L-glutamyl-tRNA(Glu) + NADPH + H(+). Its pathway is porphyrin-containing compound metabolism; protoporphyrin-IX biosynthesis; 5-aminolevulinate from L-glutamyl-tRNA(Glu): step 1/2. Functionally, catalyzes the NADPH-dependent reduction of glutamyl-tRNA(Glu) to glutamate 1-semialdehyde (GSA). This Clostridium perfringens (strain ATCC 13124 / DSM 756 / JCM 1290 / NCIMB 6125 / NCTC 8237 / Type A) protein is Glutamyl-tRNA reductase.